Here is a 570-residue protein sequence, read N- to C-terminus: A-type ATP synthase subunit A (570 aa).

ATP is bound at residue 223–230; the sequence is GPFGSGKT.

It belongs to the ATPase alpha/beta chains family. In terms of assembly, has multiple subunits with at least A(3), B(3), C, D, E, F, H, I and proteolipid K(x).

The protein localises to the cell membrane. It carries out the reaction ATP + H2O + 4 H(+)(in) = ADP + phosphate + 5 H(+)(out). Component of the A-type ATP synthase that produces ATP from ADP in the presence of a proton gradient across the membrane. The A chain is the catalytic subunit. In Nanoarchaeum equitans (strain Kin4-M), this protein is A-type ATP synthase subunit A.